The following is a 479-amino-acid chain: 6-phosphogluconate dehydrogenase, decarboxylating (479 aa).

NADP(+) is bound by residues 10 to 15 (GLAVMG), 33 to 35 (NRS), 75 to 77 (IKA), and Asn-103. Substrate-binding positions include Asn-103 and 129–131 (SGG). Lys-183 functions as the Proton acceptor in the catalytic mechanism. 186 to 187 (HN) is a substrate binding site. Catalysis depends on Glu-190, which acts as the Proton donor. Tyr-191, Lys-260, Arg-287, Arg-447, and His-453 together coordinate substrate.

It belongs to the 6-phosphogluconate dehydrogenase family. Homodimer.

The enzyme catalyses 6-phospho-D-gluconate + NADP(+) = D-ribulose 5-phosphate + CO2 + NADPH. It functions in the pathway carbohydrate degradation; pentose phosphate pathway; D-ribulose 5-phosphate from D-glucose 6-phosphate (oxidative stage): step 3/3. Catalyzes the oxidative decarboxylation of 6-phosphogluconate to ribulose 5-phosphate and CO(2), with concomitant reduction of NADP to NADPH. This chain is 6-phosphogluconate dehydrogenase, decarboxylating (gnd), found in Chlamydia muridarum (strain MoPn / Nigg).